The primary structure comprises 426 residues: Histidine--tRNA ligase (426 aa).

Belongs to the class-II aminoacyl-tRNA synthetase family. Homodimer.

Its subcellular location is the cytoplasm. It catalyses the reaction tRNA(His) + L-histidine + ATP = L-histidyl-tRNA(His) + AMP + diphosphate + H(+). The chain is Histidine--tRNA ligase from Lactiplantibacillus plantarum (strain ATCC BAA-793 / NCIMB 8826 / WCFS1) (Lactobacillus plantarum).